The chain runs to 309 residues: Malate dehydrogenase (309 aa).

Residues 6–11 and Asp-31 contribute to the NAD(+) site; that span reads GSGRVG. Arg-80 and Arg-86 together coordinate substrate. NAD(+) is bound by residues Asn-93 and 116–118; that span reads TTN. Substrate contacts are provided by Asn-118 and Arg-149. His-173 acts as the Proton acceptor in catalysis.

This sequence belongs to the LDH/MDH superfamily. Homotetramer.

It catalyses the reaction (S)-malate + NAD(+) = oxaloacetate + NADH + H(+). In terms of biological role, catalyzes the reversible oxidation of malate to oxaloacetate. Exhibits higher specific activity for oxaloacetate reduction than for malate oxidation in vitro. Has a strong preference for NAD. Can use NADPH for oxaloacetate reduction, but activity decreases more than 90%. No activity detected with NADP(+) and malate. The polypeptide is Malate dehydrogenase (Pyrobaculum islandicum (strain DSM 4184 / JCM 9189 / GEO3)).